Consider the following 256-residue polypeptide: Acetyl-coenzyme A carboxylase carboxyl transferase subunit alpha (256 aa).

A CoA carboxyltransferase C-terminal domain is found at 1–236; it reads MTDVARILKE…KLHLIDEITQ (236 aa).

Belongs to the AccA family. In terms of assembly, acetyl-CoA carboxylase is a heterohexamer composed of biotin carboxyl carrier protein (AccB), biotin carboxylase (AccC) and two subunits each of ACCase subunit alpha (AccA) and ACCase subunit beta (AccD).

It localises to the cytoplasm. The enzyme catalyses N(6)-carboxybiotinyl-L-lysyl-[protein] + acetyl-CoA = N(6)-biotinyl-L-lysyl-[protein] + malonyl-CoA. Its pathway is lipid metabolism; malonyl-CoA biosynthesis; malonyl-CoA from acetyl-CoA: step 1/1. Functionally, component of the acetyl coenzyme A carboxylase (ACC) complex. First, biotin carboxylase catalyzes the carboxylation of biotin on its carrier protein (BCCP) and then the CO(2) group is transferred by the carboxyltransferase to acetyl-CoA to form malonyl-CoA. The sequence is that of Acetyl-coenzyme A carboxylase carboxyl transferase subunit alpha from Streptococcus equi subsp. zooepidemicus (strain H70).